The following is a 167-amino-acid chain: Ureidoglycolate lyase (167 aa).

Belongs to the ureidoglycolate lyase family. Homodimer. Ni(2+) serves as cofactor.

The catalysed reaction is (S)-ureidoglycolate = urea + glyoxylate. Its pathway is nitrogen metabolism; (S)-allantoin degradation. In terms of biological role, catalyzes the catabolism of the allantoin degradation intermediate (S)-ureidoglycolate, generating urea and glyoxylate. Involved in the utilization of allantoin as nitrogen source. This Pseudomonas fluorescens (strain SBW25) protein is Ureidoglycolate lyase.